The primary structure comprises 445 residues: Phosphoglucosamine mutase 1 (445 aa).

Serine 102 (phosphoserine intermediate) is an active-site residue. The Mg(2+) site is built by serine 102, aspartate 241, aspartate 243, and aspartate 245. At serine 102 the chain carries Phosphoserine.

The protein belongs to the phosphohexose mutase family. Mg(2+) serves as cofactor. Post-translationally, activated by phosphorylation.

It carries out the reaction alpha-D-glucosamine 1-phosphate = D-glucosamine 6-phosphate. Functionally, catalyzes the conversion of glucosamine-6-phosphate to glucosamine-1-phosphate. This Shewanella frigidimarina (strain NCIMB 400) protein is Phosphoglucosamine mutase 1.